Here is a 497-residue protein sequence, read N- to C-terminus: Signal recognition particle subunit SRP54 1 (497 aa).

The interval Met1–Leu295 is G-domain. GTP contacts are provided by residues Gly108 to Thr115, Asp190 to Arg194, and Thr248 to Asp251. The tract at residues Gly296–Asp497 is M-domain.

It belongs to the GTP-binding SRP family. SRP54 subfamily. As to quaternary structure, component of a signal recognition particle (SRP) complex that consists of a 7SL RNA molecule of 300 nucleotides and six protein subunits: SRP72, SRP68, SRP54, SRP19, SRP14 and SRP9.

It is found in the cytoplasm. The protein resides in the endoplasmic reticulum. The enzyme catalyses GTP + H2O = GDP + phosphate + H(+). Component of the signal recognition particle (SRP) complex, a ribonucleoprotein complex that mediates the cotranslational targeting of secretory and membrane proteins to the endoplasmic reticulum (ER). As part of the SRP complex, associates with the SRP receptor (SR) component SRPRA to target secretory proteins to the endoplasmic reticulum membrane. Binds to the signal sequence of presecretory proteins when they emerge from the ribosomes. Displays basal GTPase activity, and stimulates reciprocal GTPase activation of the SR subunit SRPRA. Forms a guanosine 5'-triphosphate (GTP)-dependent complex with the SR subunit SRPRA. SR compaction and GTPase mediated rearrangement of SR drive SRP-mediated cotranslational protein translocation into the ER. Requires the presence of SRP9/SRP14 and/or SRP19 to stably interact with RNA. The protein is Signal recognition particle subunit SRP54 1 (SRP54-1) of Hordeum vulgare (Barley).